An 872-amino-acid polypeptide reads, in one-letter code: Protein translocase subunit SecA (872 aa).

ATP is bound by residues Gln87, 105–109 (GEGKT), and Asp500. Positions 855, 857, 866, and 867 each coordinate Zn(2+).

The protein belongs to the SecA family. In terms of assembly, monomer and homodimer. Part of the essential Sec protein translocation apparatus which comprises SecA, SecYEG and auxiliary proteins SecDF-YajC and YidC. Requires Zn(2+) as cofactor.

It localises to the cell inner membrane. Its subcellular location is the cytoplasm. The enzyme catalyses ATP + H2O + cellular proteinSide 1 = ADP + phosphate + cellular proteinSide 2.. Functionally, part of the Sec protein translocase complex. Interacts with the SecYEG preprotein conducting channel. Has a central role in coupling the hydrolysis of ATP to the transfer of proteins into and across the cell membrane, serving both as a receptor for the preprotein-SecB complex and as an ATP-driven molecular motor driving the stepwise translocation of polypeptide chains across the membrane. This Anaplasma marginale (strain St. Maries) protein is Protein translocase subunit SecA.